A 571-amino-acid polypeptide reads, in one-letter code: MDNKISPEAQVAELELDAVIGFNGHVPTGLKCHPDQEHLIFPLGCTILIQAINTQEQNFLQGHGNNVSCLAISRSGRYIASGQVTFMGFKADIILWDYKKRELLARLSLHKGKIEALAFSPNDLYLVSLGGPDDGSVVVWSIAKRDAICGSPAAGLNVGNATNVIFSRCRDEMFVTAGNGTIRVWELDLPNRKIWPTECQTGQMKRIVMSIGMADDDSFFYLGTTTGDILKMNPRTKLLTDAGPAKDKFSLGVSAIRCLKMGGLLVGSGAGLLVFCKSPSYKPIKKIQSQGGITSITLRGEGHQFFVGTEESHIYRVSFTDFKETLIATCHFEAVEDIVFPFGTAELFATCAKKDIRVWHTSSNSAHRIGVTAIATTSDCKRVISGGGEGEVRVWQIGCQTQKLEEALKEHKSSVSCIRVKKNNEECVTASTDGTCIIWDLVRLRRNQMILANTLFQCVCYHPEEFQIITSGTDRKIAYWEVFDGTVIRELEGSLSGSINGMDITQEGVHFVTGGNDHLVKVWDYNEGEVTHVGVGHSGNITRIRISPGNQYIVSVSADGAILRWKYPYTS.

10 WD repeats span residues 62–106 (GHGN…LLAR), 109–150 (LHKG…AICG), 156–195 (LNVG…RKIW), 288–327 (QSQG…ETLI), 330–364 (CHFE…TSSN), 366–405 (AHRI…QKLE), 410–449 (EHKS…RNQM), 451–490 (LANT…VIRE), 494–533 (SLSG…VTHV), and 536–571 (GHSG…PYTS).

It belongs to the CFAP52 family. In terms of assembly, microtubule inner protein component of sperm flagellar doublet microtubules. Interacts with BRCA2. Interacts with the CCT chaperonin complex. Interacts with HSP70. Interacts with AK8. Interacts with CFAP45. Interacts with DNAI1. Interacts with IQDC.

The protein resides in the cytoplasm. Its subcellular location is the cytoskeleton. It localises to the cilium axoneme. It is found in the flagellum axoneme. In terms of biological role, microtubule inner protein (MIP) part of the dynein-decorated doublet microtubules (DMTs) in cilia axoneme. Important for proper ciliary and flagellar beating. May act in cooperation with CFAP45 and axonemal dynein subunit DNAH11. May play a role in cell growth and/or survival. This is Cilia- and flagella-associated protein 52 from Macaca fascicularis (Crab-eating macaque).